Here is a 344-residue protein sequence, read N- to C-terminus: Protein RecA (344 aa).

66–73 serves as a coordination point for ATP; sequence GPESSGKT.

The protein belongs to the RecA family.

Its subcellular location is the cytoplasm. Can catalyze the hydrolysis of ATP in the presence of single-stranded DNA, the ATP-dependent uptake of single-stranded DNA by duplex DNA, and the ATP-dependent hybridization of homologous single-stranded DNAs. It interacts with LexA causing its activation and leading to its autocatalytic cleavage. In Methylobacillus flagellatus (strain ATCC 51484 / DSM 6875 / VKM B-1610 / KT), this protein is Protein RecA.